Reading from the N-terminus, the 257-residue chain is Large ribosomal subunit protein uL2 (257 aa).

The tract at residues 207-230 (VEHPFGGGNHQHIGKPSTIRRDAP) is disordered.

This sequence belongs to the universal ribosomal protein uL2 family. Component of the large ribosomal subunit.

It is found in the cytoplasm. In terms of biological role, component of the large ribosomal subunit. The ribosome is a large ribonucleoprotein complex responsible for the synthesis of proteins in the cell. The polypeptide is Large ribosomal subunit protein uL2 (rpl8) (Danio rerio (Zebrafish)).